The chain runs to 475 residues: Ribulose bisphosphate carboxylase large chain (475 aa).

A propeptide spanning residues 1 to 2 is cleaved from the precursor; the sequence is MA. N-acetylproline is present on proline 3. Lysine 14 is modified (N6,N6,N6-trimethyllysine). Positions 123 and 173 each coordinate substrate. The active-site Proton acceptor is lysine 175. Lysine 177 lines the substrate pocket. Mg(2+) is bound by residues lysine 201, aspartate 203, and glutamate 204. Lysine 201 bears the N6-carboxylysine mark. The active-site Proton acceptor is the histidine 294. Substrate is bound by residues arginine 295, histidine 327, and serine 379.

This sequence belongs to the RuBisCO large chain family. Type I subfamily. In terms of assembly, heterohexadecamer of 8 large chains and 8 small chains; disulfide-linked. The disulfide link is formed within the large subunit homodimers. Requires Mg(2+) as cofactor. Post-translationally, the disulfide bond which can form in the large chain dimeric partners within the hexadecamer appears to be associated with oxidative stress and protein turnover.

The protein resides in the plastid. It localises to the chloroplast. The catalysed reaction is 2 (2R)-3-phosphoglycerate + 2 H(+) = D-ribulose 1,5-bisphosphate + CO2 + H2O. It carries out the reaction D-ribulose 1,5-bisphosphate + O2 = 2-phosphoglycolate + (2R)-3-phosphoglycerate + 2 H(+). Functionally, ruBisCO catalyzes two reactions: the carboxylation of D-ribulose 1,5-bisphosphate, the primary event in carbon dioxide fixation, as well as the oxidative fragmentation of the pentose substrate in the photorespiration process. Both reactions occur simultaneously and in competition at the same active site. The protein is Ribulose bisphosphate carboxylase large chain of Tupiella akineta (Green alga).